Consider the following 529-residue polypeptide: Bifunctional purine biosynthesis protein PurH (529 aa).

The MGS-like domain maps to 1 to 148 (MQQRRPIRRA…KNHKDVAIVV (148 aa)).

The protein belongs to the PurH family.

The catalysed reaction is (6R)-10-formyltetrahydrofolate + 5-amino-1-(5-phospho-beta-D-ribosyl)imidazole-4-carboxamide = 5-formamido-1-(5-phospho-D-ribosyl)imidazole-4-carboxamide + (6S)-5,6,7,8-tetrahydrofolate. It catalyses the reaction IMP + H2O = 5-formamido-1-(5-phospho-D-ribosyl)imidazole-4-carboxamide. Its pathway is purine metabolism; IMP biosynthesis via de novo pathway; 5-formamido-1-(5-phospho-D-ribosyl)imidazole-4-carboxamide from 5-amino-1-(5-phospho-D-ribosyl)imidazole-4-carboxamide (10-formyl THF route): step 1/1. It functions in the pathway purine metabolism; IMP biosynthesis via de novo pathway; IMP from 5-formamido-1-(5-phospho-D-ribosyl)imidazole-4-carboxamide: step 1/1. This Yersinia pseudotuberculosis serotype O:1b (strain IP 31758) protein is Bifunctional purine biosynthesis protein PurH.